The following is a 303-amino-acid chain: Dihydroorotate dehydrogenase B (NAD(+)), catalytic subunit (303 aa).

Substrate contacts are provided by residues Lys-46, 70-74 (NAIGL), and Asn-124. 46-47 (KS) is an FMN binding site. Asn-124 serves as a coordination point for FMN. Cys-127 serves as the catalytic Nucleophile. 2 residues coordinate FMN: Lys-163 and Ile-189. A substrate-binding site is contributed by 190 to 191 (NS). FMN contacts are provided by residues Gly-216, 242–243 (GG), and 264–265 (GT).

It belongs to the dihydroorotate dehydrogenase family. Type 1 subfamily. As to quaternary structure, heterotetramer of 2 PyrK and 2 PyrD type B subunits. It depends on FMN as a cofactor.

It is found in the cytoplasm. The enzyme catalyses (S)-dihydroorotate + NAD(+) = orotate + NADH + H(+). It participates in pyrimidine metabolism; UMP biosynthesis via de novo pathway; orotate from (S)-dihydroorotate (NAD(+) route): step 1/1. In terms of biological role, catalyzes the conversion of dihydroorotate to orotate with NAD(+) as electron acceptor. In Methanothermobacter thermautotrophicus (strain ATCC 29096 / DSM 1053 / JCM 10044 / NBRC 100330 / Delta H) (Methanobacterium thermoautotrophicum), this protein is Dihydroorotate dehydrogenase B (NAD(+)), catalytic subunit (pyrD).